The primary structure comprises 156 residues: Cellulose synthase operon protein D (156 aa).

It functions in the pathway glycan metabolism; bacterial cellulose biosynthesis. Its function is as follows. May have a major role in the perfection of crystallization, involved either in the pore structure itself or in the organization of the pores within the linear array of terminal synthesizing complexes (TCs). The sequence is that of Cellulose synthase operon protein D from Komagataeibacter sucrofermentans (strain ATCC 700178 / DSM 15973 / CECT 7291 / JCM 9730 / LMG 18788 / BPR 2001) (Acetobacter xylinus subsp. sucrofermentans).